A 151-amino-acid chain; its full sequence is Large ribosomal subunit protein uL13 (151 aa).

Belongs to the universal ribosomal protein uL13 family. In terms of assembly, part of the 50S ribosomal subunit.

This protein is one of the early assembly proteins of the 50S ribosomal subunit, although it is not seen to bind rRNA by itself. It is important during the early stages of 50S assembly. The protein is Large ribosomal subunit protein uL13 of Synechococcus elongatus (strain ATCC 33912 / PCC 7942 / FACHB-805) (Anacystis nidulans R2).